We begin with the raw amino-acid sequence, 177 residues long: Inner membrane-spanning protein YciB (177 aa).

5 helical membrane-spanning segments follow: residues 23 to 43 (MFVA…WAWF), 50 to 70 (TMQW…LLLH), 73 to 93 (HFIM…LLIS), 119 to 139 (LTWA…FVAY), and 149 to 169 (FKLF…SLFL).

This sequence belongs to the YciB family.

It is found in the cell inner membrane. Plays a role in cell envelope biogenesis, maintenance of cell envelope integrity and membrane homeostasis. The polypeptide is Inner membrane-spanning protein YciB (Chromobacterium violaceum (strain ATCC 12472 / DSM 30191 / JCM 1249 / CCUG 213 / NBRC 12614 / NCIMB 9131 / NCTC 9757 / MK)).